Here is a 293-residue protein sequence, read N- to C-terminus: Elongation factor Ts (293 aa).

An involved in Mg(2+) ion dislocation from EF-Tu region spans residues 80-83; the sequence is TDFV.

It belongs to the EF-Ts family.

Its subcellular location is the cytoplasm. In terms of biological role, associates with the EF-Tu.GDP complex and induces the exchange of GDP to GTP. It remains bound to the aminoacyl-tRNA.EF-Tu.GTP complex up to the GTP hydrolysis stage on the ribosome. The protein is Elongation factor Ts of Janthinobacterium sp. (strain Marseille) (Minibacterium massiliensis).